The chain runs to 153 residues: Superoxide dismutase [Cu-Zn] (153 aa).

Cu cation-binding residues include histidine 46, histidine 48, and histidine 63. Cysteine 57 and cysteine 146 are oxidised to a cystine. The tract at residues 61 to 80 (GPHFNPFGKEHGAPEDENRH) is disordered. Residues histidine 63, histidine 71, histidine 80, and aspartate 83 each contribute to the Zn(2+) site. Over residues 68–80 (GKEHGAPEDENRH) the composition is skewed to basic and acidic residues. Histidine 120 serves as a coordination point for Cu cation. The span at 124–136 (DDLGRSEHPESKK) shows a compositional bias: basic and acidic residues. Residues 124 to 143 (DDLGRSEHPESKKTGNAGAR) form a disordered region. Arginine 143 contacts substrate.

The protein belongs to the Cu-Zn superoxide dismutase family. In terms of assembly, homodimer. Requires Cu cation as cofactor. The cofactor is Zn(2+).

The protein resides in the cytoplasm. The enzyme catalyses 2 superoxide + 2 H(+) = H2O2 + O2. Functionally, destroys radicals which are normally produced within the cells and which are toxic to biological systems. This chain is Superoxide dismutase [Cu-Zn] (sodC), found in Aspergillus flavus.